A 521-amino-acid chain; its full sequence is AAA ATPase forming ring-shaped complexes (521 aa).

Positions 4–44 (TEDLAALNDRLMAKNHALAEALSRAGKELTKAKSQLAQLAQ) form a coiled coil. 235–240 (GNGKTM) serves as a coordination point for ATP.

This sequence belongs to the AAA ATPase family. In terms of assembly, homohexamer. Assembles into a hexameric ring structure.

The sequence is that of AAA ATPase forming ring-shaped complexes from Bifidobacterium longum (strain DJO10A).